The chain runs to 96 residues: Co-chaperonin GroES (96 aa).

The protein belongs to the GroES chaperonin family. As to quaternary structure, heptamer of 7 subunits arranged in a ring. Interacts with the chaperonin GroEL.

The protein resides in the cytoplasm. Together with the chaperonin GroEL, plays an essential role in assisting protein folding. The GroEL-GroES system forms a nano-cage that allows encapsulation of the non-native substrate proteins and provides a physical environment optimized to promote and accelerate protein folding. GroES binds to the apical surface of the GroEL ring, thereby capping the opening of the GroEL channel. The protein is Co-chaperonin GroES of Methylobacillus flagellatus (strain ATCC 51484 / DSM 6875 / VKM B-1610 / KT).